We begin with the raw amino-acid sequence, 331 residues long: Pantothenate kinase (331 aa).

109–116 (GSVAVGKS) provides a ligand contact to ATP.

Belongs to the prokaryotic pantothenate kinase family.

The protein localises to the cytoplasm. It catalyses the reaction (R)-pantothenate + ATP = (R)-4'-phosphopantothenate + ADP + H(+). Its pathway is cofactor biosynthesis; coenzyme A biosynthesis; CoA from (R)-pantothenate: step 1/5. This is Pantothenate kinase from Rhizobium etli (strain CIAT 652).